A 147-amino-acid chain; its full sequence is uncharacterized protein (147 aa).

An HTH LytTR-type domain is found at 44–147 (LVGYIDKEIH…LKSIKERLSI (104 aa)).

It is found in the cytoplasm. This is an uncharacterized protein from Staphylococcus aureus (strain MRSA252).